Reading from the N-terminus, the 235-residue chain is Claudin-16 (235 aa).

Over 1–3 the chain is Cytoplasmic; the sequence is MKD. Residues 4-24 traverse the membrane as a helical segment; that stretch reads LLQYAACFLAIFSTGFLIVAT. At 25 to 79 the chain is on the extracellular side; sequence RTDCWMVNADDSLEVSTKCRGLWWECVTNAFDGIRTCDEYDSIYAEHPLKLVVTR. A helical membrane pass occupies residues 80-100; it reads ALMITADILAGFGFITLLLGL. Topologically, residues 101-115 are cytoplasmic; the sequence is DCVKFLPDEPHIKVR. A helical transmembrane segment spans residues 116 to 136; sequence LCFVAGTVLLIAGTPGIIGSV. Topologically, residues 137 to 169 are extracellular; that stretch reads WYAVDVYVERSSLVLHNIFLGIQYKFGWSCWLG. Residues 170–190 form a helical membrane-spanning segment; sequence MAGSLGCFLAGALLTCCLYLF. The Cytoplasmic portion of the chain corresponds to 191–235; the sequence is KDVGPERNYPYAMRKPYSTAGVSMAKSYKAPRTETAKMYAVDTRV. The Interaction with TJP1 motif lies at 233-235; the sequence is TRV.

Belongs to the claudin family. Can form heteropolymeric tight junction strands with other claudins. Interacts with CLDN19. Interacts (via PDZ-binding motif TRV) with TJP1 (via PDZ domain). Cannot form tight junction strands on its own.

The protein resides in the cell junction. Its subcellular location is the tight junction. The protein localises to the cell membrane. The catalysed reaction is Mg(2+)(in) = Mg(2+)(out). It carries out the reaction Ca(2+)(in) = Ca(2+)(out). The enzyme catalyses Na(+)(in) = Na(+)(out). It catalyses the reaction K(+)(in) = K(+)(out). The catalysed reaction is Rb(+)(in) = Rb(+)(out). It carries out the reaction Cs(+)(in) = Cs(+)(out). The enzyme catalyses Li(+)(in) = Li(+)(out). In terms of biological role, forms paracellular channels: coassembles with CLDN19 into tight junction strands with cation-selective channels through the strands, conveying epithelial permeability in a process known as paracellular tight junction permeability. Involved in the maintenance of ion gradients along the nephron. In the thick ascending limb (TAL) of Henle's loop, facilitates sodium paracellular permeability from the interstitial compartment to the lumen, contributing to the lumen-positive transepithelial potential that drives paracellular magnesium and calcium reabsorption. The sequence is that of Claudin-16 from Rattus norvegicus (Rat).